Here is a 345-residue protein sequence, read N- to C-terminus: Phosphate acyltransferase (345 aa).

This sequence belongs to the PlsX family. Homodimer. Probably interacts with PlsY.

The protein resides in the cytoplasm. It catalyses the reaction a fatty acyl-[ACP] + phosphate = an acyl phosphate + holo-[ACP]. Its pathway is lipid metabolism; phospholipid metabolism. In terms of biological role, catalyzes the reversible formation of acyl-phosphate (acyl-PO(4)) from acyl-[acyl-carrier-protein] (acyl-ACP). This enzyme utilizes acyl-ACP as fatty acyl donor, but not acyl-CoA. This chain is Phosphate acyltransferase, found in Chromobacterium violaceum (strain ATCC 12472 / DSM 30191 / JCM 1249 / CCUG 213 / NBRC 12614 / NCIMB 9131 / NCTC 9757 / MK).